A 321-amino-acid chain; its full sequence is Probable 2-oxoglutarate-dependent dioxygenase AOP1.2 (321 aa).

The region spanning 165 to 270 (TYYLTRLMKY…RYSTGLFSIP (106 aa)) is the Fe2OG dioxygenase domain. Positions 194, 196, and 251 each coordinate Fe cation. Arg261 provides a ligand contact to 2-oxoglutarate.

This sequence belongs to the iron/ascorbate-dependent oxidoreductase family. Fe(2+) serves as cofactor.

Probable 2-oxoglutarate-dependent dioxygenase that may be involved in glucosinolates biosynthesis. May play a role in the production of aliphatic glucosinolates. The sequence is that of Probable 2-oxoglutarate-dependent dioxygenase AOP1.2 (AOP1.2) from Arabidopsis thaliana (Mouse-ear cress).